The following is a 571-amino-acid chain: E3 ubiquitin-protein ligase ipaH3 (571 aa).

The interaction with target proteins stretch occupies residues 1-260 (MSIMLPINNN…SQQTAQPDYH (260 aa)). LRR repeat units lie at residues 58–81 (INQFSELQLNRLNLSSLPDNLPPQ), 83–99 (TVLEITQNALISLPELP), 100–119 (ASLEYLDACDNRLSTLPELP), 120–144 (ASLKHLDVDNNQLTMLPELPALLEY), 146–159 (NADNNQLTMLPELP), 160–184 (TSLEVLSVRNNQLTFLPELPESLEA), 186–202 (DVSTNLLESLPAVPVRN), 205–229 (SEETEIFFRCRENRITHIPENILSL), and 232–260 (TCTIILEDNPLSSRIRESLSQQTAQPDYH). Residues 269–278 (SDGQQNTLHR) form a linker region. Residues 279–571 (PLADAVTAWF…SENGSQLHHS (293 aa)) form the NEL domain. Positions 279–571 (PLADAVTAWF…SENGSQLHHS (293 aa)) are E3 ubiquitin-protein ligase catalytic domain. Cys-363 functions as the Glycyl thioester intermediate in the catalytic mechanism.

Belongs to the LRR-containing bacterial E3 ligase family. Ubiquitinated in the presence of host E1 ubiquitin-activating enzyme, E2 ubiquitin-conjugating enzyme UBE2D3 and ubiquitin.

It localises to the secreted. The protein localises to the host cytoplasm. The catalysed reaction is S-ubiquitinyl-[E2 ubiquitin-conjugating enzyme]-L-cysteine + [acceptor protein]-L-lysine = [E2 ubiquitin-conjugating enzyme]-L-cysteine + N(6)-ubiquitinyl-[acceptor protein]-L-lysine.. In terms of biological role, effector proteins function to alter host cell physiology and promote bacterial survival in host tissues. This protein is an E3 ubiquitin ligase that interferes with host's ubiquitination pathway. Synthesizes a 'Lys-48'-linked ubiquitin chain, which requires non-covalent binding between ubiquitin and the host ubiquitin-conjugating enzyme UBE2D1. This is E3 ubiquitin-protein ligase ipaH3 (ipaH3) from Shigella flexneri.